The following is a 40-amino-acid chain: Large ribosomal subunit protein bL36 (40 aa).

Belongs to the bacterial ribosomal protein bL36 family.

The polypeptide is Large ribosomal subunit protein bL36 (Corynebacterium glutamicum (strain R)).